The chain runs to 291 residues: Regulator of rDNA transcription protein 5 (291 aa).

The RRM 1 domain occupies 21-104 (KRIYISNLDF…RTLKIKMYVP (84 aa)). Residues 109-151 (ARAERRKEKRKVPAPQAEENPDAAPQDAQQPQPPAPAEEPTSK) form a disordered region. Positions 152-235 (DTVYCAYLPS…KKITLRPARL (84 aa)) constitute an RRM 2 domain. Residues 271–291 (HRQQEAEIPAAETPDDVAATA) form a disordered region.

It belongs to the RRT5 family.

In terms of biological role, may be involved in the modulation of rDNA transcription. This Lachancea thermotolerans (strain ATCC 56472 / CBS 6340 / NRRL Y-8284) (Yeast) protein is Regulator of rDNA transcription protein 5 (RRT5).